The primary structure comprises 259 residues: Adenosylcobinamide-GDP ribazoletransferase (259 aa).

The next 7 helical transmembrane spans lie at Ala-41–Phe-61, Phe-67–Gly-87, Ile-119–Ser-139, Leu-148–Leu-168, Ala-179–Pro-199, Leu-200–Ala-220, and Thr-237–Leu-257.

This sequence belongs to the CobS family. The cofactor is Mg(2+).

Its subcellular location is the cell inner membrane. The catalysed reaction is alpha-ribazole + adenosylcob(III)inamide-GDP = adenosylcob(III)alamin + GMP + H(+). It catalyses the reaction alpha-ribazole 5'-phosphate + adenosylcob(III)inamide-GDP = adenosylcob(III)alamin 5'-phosphate + GMP + H(+). The protein operates within cofactor biosynthesis; adenosylcobalamin biosynthesis; adenosylcobalamin from cob(II)yrinate a,c-diamide: step 7/7. In terms of biological role, joins adenosylcobinamide-GDP and alpha-ribazole to generate adenosylcobalamin (Ado-cobalamin). Also synthesizes adenosylcobalamin 5'-phosphate from adenosylcobinamide-GDP and alpha-ribazole 5'-phosphate. This chain is Adenosylcobinamide-GDP ribazoletransferase, found in Mesorhizobium japonicum (strain LMG 29417 / CECT 9101 / MAFF 303099) (Mesorhizobium loti (strain MAFF 303099)).